The primary structure comprises 468 residues: uncharacterized protein (468 aa).

2 coiled-coil regions span residues 10–94 (NEAL…VKEL) and 147–279 (FVEL…EASI). Positions 324-369 (TPRTVDPIPEGTIIKKESSDDAMFSGLKKSKPKKSNKSNNNQADSD) are disordered. Ser342 bears the Phosphoserine mark. The stretch at 399–445 (VEQLKSRIAHFKEQQDSVTKQRIEKAKQEIEKLEAKYNSKEEKTLTE) forms a coiled coil.

It localises to the cytoplasm. This is an uncharacterized protein from Schizosaccharomyces pombe (strain 972 / ATCC 24843) (Fission yeast).